The primary structure comprises 308 residues: MMPPVRGTLTQGRILADLTWLRVGGPADWLFQPADEADLVQFLGALDPAVPVFPMGVGSNLIVRDGGLRAVVIRLGRGFNAIRIEGDRVIAGAAALDAHVARRAAEAGRDLTFLRTIPGSIGGAVRMNAGCYGSYVADHLIEVRAVTREGRAVTLPAAELGLAYRQSALPEGCVLTEATFRAEAGDPAELARRMDEQIARRDSSQPTKERSAGSTFRNPAGFSSTGRADDTHELKAWKLIDEAGLRGARRGGAQMSEMHSNFLINAGGATAADLEGLGEEVIKRVFQSSGIRLEWEIMRVGELPVNKE.

Positions 22-185 constitute an FAD-binding PCMH-type domain; the sequence is RVGGPADWLF…TEATFRAEAG (164 aa). Residue R165 is part of the active site. The span at 197–211 shows a compositional bias: basic and acidic residues; the sequence is QIARRDSSQPTKERS. The tract at residues 197–228 is disordered; the sequence is QIARRDSSQPTKERSAGSTFRNPAGFSSTGRA. Over residues 212–226 the composition is skewed to polar residues; sequence AGSTFRNPAGFSSTG. The active-site Proton donor is S214. E296 is an active-site residue.

Belongs to the MurB family. It depends on FAD as a cofactor.

The protein localises to the cytoplasm. The enzyme catalyses UDP-N-acetyl-alpha-D-muramate + NADP(+) = UDP-N-acetyl-3-O-(1-carboxyvinyl)-alpha-D-glucosamine + NADPH + H(+). It participates in cell wall biogenesis; peptidoglycan biosynthesis. Cell wall formation. This is UDP-N-acetylenolpyruvoylglucosamine reductase from Cereibacter sphaeroides (strain ATCC 17029 / ATH 2.4.9) (Rhodobacter sphaeroides).